The primary structure comprises 332 residues: Ferredoxin--NADP reductase (332 aa).

FAD-binding residues include Asp-33, Gln-41, Tyr-46, Ala-86, Met-121, Asp-282, and Ser-325.

This sequence belongs to the ferredoxin--NADP reductase type 2 family. Homodimer. It depends on FAD as a cofactor.

It catalyses the reaction 2 reduced [2Fe-2S]-[ferredoxin] + NADP(+) + H(+) = 2 oxidized [2Fe-2S]-[ferredoxin] + NADPH. The sequence is that of Ferredoxin--NADP reductase from Sulfurisphaera tokodaii (strain DSM 16993 / JCM 10545 / NBRC 100140 / 7) (Sulfolobus tokodaii).